Here is a 965-residue protein sequence, read N- to C-terminus: Collagen alpha-1(I) chain (965 aa).

Residues 1-965 (GGISVPGPMG…PGPPGPPGPP (965 aa)) form a disordered region. 4-hydroxyproline is present on residues P18, P21, P23, P32, P35, P38, P53, P68, P74, P83, and P89. The segment covering 26 to 44 (QGFQGPPGEPGEPGSSGPM) has biased composition (low complexity). A compositionally biased stretch (basic and acidic residues) spans 56–70 (NGDDGEAGKPGRPGE). K92 carries the post-translational modification 5-hydroxylysine; alternate. A glycan (O-linked (Gal...) hydroxylysine; alternate) is linked at K92. S98 bears the Phosphoserine mark. Over residues 106–122 (DAGPAGPKGEPGSPGEN) the composition is skewed to low complexity. A 4-hydroxyproline mark is found at P116, P119, P125, P139, P160, P169, P172, P199, P202, P214, P220, P229, P235, P238, and P253. A compositionally biased stretch (low complexity) spans 139–157 (PGASGPAGARGNDGATGAA). Residues 159–171 (PPGPTGPAGPPGF) are compositionally biased toward pro residues. The span at 205 to 244 (AGAAGPAGNPGADGQPGAKGANGAPGIAGAPGFPGARGPS) shows a compositional bias: low complexity. Position 256 is a 5-hydroxylysine (K256). P262, P265, P269, P278, P293, P299, P308, and P314 each carry 4-hydroxyproline. Residues 303–312 (GERGGPGSRG) are compositionally biased toward gly residues. The residue at position 323 (K323) is a 5-hydroxylysine. 4-hydroxyproline occurs at positions 326, 332, 338, 347, 350, 359, 368, 374, 386, 395, 404, 407, 425, 442, 448, 454, 460, 466, 472, 484, 493, 506, 512, and 521. A compositionally biased stretch (low complexity) spans 341-367 (KGLTGSPGSPGPDGKTGPPGPAGQDGR). Low complexity predominate over residues 376–395 (ARGQAGVMGFPGPKGAAGEP). Residues 454 to 463 (PGEAGKPGEQ) show a composition bias toward low complexity. Position 533 is a 5-hydroxylysine (K533). 3 positions are modified to 4-hydroxyproline: P539, P554, and P560. Over residues 566 to 580 (SGPSGPAGPTGARGA) the composition is skewed to low complexity. The residue at position 569 (S569) is a Phosphoserine. 8 positions are modified to 4-hydroxyproline: P581, P587, P590, P599, P605, P623, P632, and P641. A compositionally biased stretch (low complexity) spans 593 to 620 (AGFAGPPGADGQPGAKGEPGDAGAKGDA). Residue K644 is modified to 5-hydroxylysine. Over residues 649 to 665 (SAGPPGATGFPGAAGRV) the composition is skewed to low complexity. A 4-hydroxyproline mark is found at P653 and P659. Residue P667 is modified to 3-hydroxyproline. 14 positions are modified to 4-hydroxyproline: P668, P677, P680, P716, P725, P743, P752, P755, P761, P776, P782, P788, P796, and P802. The span at 710-725 (SGEKGSPGADGPAGAP) shows a compositional bias: low complexity. Positions 775-785 (PPGPMGPPGLA) are enriched in pro residues. K811 carries the 5-hydroxylysine modification. Residues P819, P822, and P825 each carry the 4-hydroxyproline modification. The span at 819–831 (PGAPGAPGAPGPV) shows a compositional bias: pro residues. Positions 851–865 (AGPAGARGPAGPQGP) are enriched in low complexity. Positions 866–880 (RGDKGETGEQGDRGI) are enriched in basic and acidic residues. K869 carries the 5-hydroxylysine modification. K881 carries the post-translational modification 5-hydroxylysine; alternate. O-linked (Gal...) hydroxylysine; alternate glycosylation is present at K881. 4-hydroxyproline is present on residues P896, P899, P917, and P932. Low complexity predominate over residues 899–932 (PGEQGPSGASGPAGPRGPPGSAGSPGKDGLNGLP). P937 is subject to 3-hydroxyproline. P938 is modified (4-hydroxyproline). A compositionally biased stretch (pro residues) spans 950-965 (VGPPGPPGPPGPPGPP). Residue P952 is modified to 3-hydroxyproline. Position 953 is a 4-hydroxyproline (P953). Residue P955 is modified to 3-hydroxyproline. P956 is subject to 4-hydroxyproline. P958 carries the 3-hydroxyproline modification. P959, P962, and P965 each carry 4-hydroxyproline.

This sequence belongs to the fibrillar collagen family. In terms of assembly, trimers of one alpha 2(I) and two alpha 1(I) chains. Contains mostly 4-hydroxyproline. Proline residues at the third position of the tripeptide repeating unit (G-X-Y) are hydroxylated in some or all of the chains. In terms of processing, contains 3-hydroxyproline at a few sites. This modification occurs on the first proline residue in the sequence motif Gly-Pro-Hyp, where Hyp is 4-hydroxyproline. Post-translationally, lysine residues at the third position of the tripeptide repeating unit (G-X-Y) are 5-hydroxylated in some or all of the chains. O-glycosylated on hydroxylated lysine residues. The O-linked glycan consists of a Glc-Gal disaccharide. As to expression, expressed in bones.

It localises to the secreted. It is found in the extracellular space. Its subcellular location is the extracellular matrix. Functionally, type I collagen is a member of group I collagen (fibrillar forming collagen). This Acratocnus sp. (strain SLP-2019) (Ground sloth) protein is Collagen alpha-1(I) chain.